Reading from the N-terminus, the 657-residue chain is Protein mono-ADP-ribosyltransferase TIPARP (657 aa).

The segment covering 1–10 (MEVETTEPEP) has biased composition (acidic residues). A disordered region spans residues 1–22 (MEVETTEPEPDCVVQPPSPSDD). The residue at position 39 (Cys-39) is an ADP-ribosylcysteine. A Nuclear localization signal motif is present at residues 41 to 48 (KKKQEQKR). Residues 121–154 (QLPEAHPSTDAPEQGVPIQDHSFPPETISGTVAD) are disordered. A C3H1-type zinc finger spans residues 238–265 (ENGIEICMDFLQGTCIYGRDCLKHHTVL). The region spanning 333–411 (STPPCSNSNS…RRPLFRSCFI (79 aa)) is the WWE domain. The PARP catalytic domain occupies 449-657 (YPETWVYMHP…YEEVSNTVSI (209 aa)).

It belongs to the ARTD/PARP family. As to quaternary structure, interacts with AHR. In terms of processing, auto-mono-ADP-ribosylated. In terms of tissue distribution, ubiquitously expressed.

It is found in the nucleus. It carries out the reaction L-aspartyl-[protein] + NAD(+) = 4-O-(ADP-D-ribosyl)-L-aspartyl-[protein] + nicotinamide. It catalyses the reaction L-glutamyl-[protein] + NAD(+) = 5-O-(ADP-D-ribosyl)-L-glutamyl-[protein] + nicotinamide. The enzyme catalyses L-cysteinyl-[protein] + NAD(+) = S-(ADP-D-ribosyl)-L-cysteinyl-[protein] + nicotinamide + H(+). Its function is as follows. ADP-ribosyltransferase that mediates mono-ADP-ribosylation of glutamate, aspartate and cysteine residues on target proteins. Acts as a negative regulator of AHR by mediating mono-ADP-ribosylation of AHR, leading to inhibit transcription activator activity of AHR. This Mus musculus (Mouse) protein is Protein mono-ADP-ribosyltransferase TIPARP.